The primary structure comprises 199 residues: dITP/XTP pyrophosphatase (199 aa).

7-12 is a binding site for substrate; that stretch reads SNNPGK. Residue Asp-68 is the Proton acceptor of the active site. Asp-68 provides a ligand contact to Mg(2+). Substrate contacts are provided by residues Ala-69, 154-157, Lys-177, and 182-183; these read FGFD and HR.

Belongs to the HAM1 NTPase family. As to quaternary structure, homodimer. Mg(2+) serves as cofactor.

It catalyses the reaction XTP + H2O = XMP + diphosphate + H(+). It carries out the reaction dITP + H2O = dIMP + diphosphate + H(+). The catalysed reaction is ITP + H2O = IMP + diphosphate + H(+). Pyrophosphatase that catalyzes the hydrolysis of nucleoside triphosphates to their monophosphate derivatives, with a high preference for the non-canonical purine nucleotides XTP (xanthosine triphosphate), dITP (deoxyinosine triphosphate) and ITP. Seems to function as a house-cleaning enzyme that removes non-canonical purine nucleotides from the nucleotide pool, thus preventing their incorporation into DNA/RNA and avoiding chromosomal lesions. This is dITP/XTP pyrophosphatase from Verminephrobacter eiseniae (strain EF01-2).